Here is a 174-residue protein sequence, read N- to C-terminus: Shikimate kinase 2 (174 aa).

Residue 12 to 17 (GCGKTT) participates in ATP binding. Thr16 and Asp32 together coordinate Mg(2+). 3 residues coordinate substrate: Asp34, Arg58, and Gly79. Residues 112–126 (QAAPEEDLRPTLTGK) are LID domain. Residue Arg120 participates in ATP binding. A substrate-binding site is contributed by Arg139.

The protein belongs to the shikimate kinase family. AroL subfamily. As to quaternary structure, monomer. Requires Mg(2+) as cofactor.

The protein resides in the cytoplasm. It catalyses the reaction shikimate + ATP = 3-phosphoshikimate + ADP + H(+). The protein operates within metabolic intermediate biosynthesis; chorismate biosynthesis; chorismate from D-erythrose 4-phosphate and phosphoenolpyruvate: step 5/7. In terms of biological role, catalyzes the specific phosphorylation of the 3-hydroxyl group of shikimic acid using ATP as a cosubstrate. The chain is Shikimate kinase 2 from Shigella dysenteriae serotype 1 (strain Sd197).